Here is a 346-residue protein sequence, read N- to C-terminus: Low specificity L-threonine aldolase (346 aa).

At Lys207 the chain carries N6-(pyridoxal phosphate)lysine.

The protein belongs to the threonine aldolase family. As to quaternary structure, homotetramer. Pyridoxal 5'-phosphate is required as a cofactor.

The enzyme catalyses L-threonine = acetaldehyde + glycine. The catalysed reaction is L-allo-threonine = acetaldehyde + glycine. Its function is as follows. Catalyzes the cleavage of L-allo-threonine and L-threonine to glycine and acetaldehyde. This is Low specificity L-threonine aldolase (ltaE) from Pseudomonas aeruginosa (strain ATCC 15692 / DSM 22644 / CIP 104116 / JCM 14847 / LMG 12228 / 1C / PRS 101 / PAO1).